A 420-amino-acid polypeptide reads, in one-letter code: PHO85 cyclin-6 (420 aa).

Disordered regions lie at residues 1–82 (MSIK…ESSF), 134–155 (QGTHTVQSSTQEDKILDGDTSN), and 268–321 (VTTT…GVQR). A compositionally biased stretch (low complexity) spans 7-22 (SPSSTNASSSPKSTYS). Residue serine 61 is modified to Phosphoserine. Positions 134-143 (QGTHTVQSST) are enriched in polar residues. Basic and acidic residues predominate over residues 277 to 296 (AKHESPSNESSLDKANRGAD). 2 positions are modified to phosphoserine: serine 281 and serine 312. Over residues 307–316 (NENDDSDDEN) the composition is skewed to acidic residues. At threonine 317 the chain carries Phosphothreonine.

This sequence belongs to the cyclin family. PHO80 subfamily. Forms a cyclin-CDK complex with PHO85. Interacts with the substrate protein YJL084C. Interacts with elongin-C, which stabilizes PCL6. Interacts with the CDK inhibitor (CKI) PHO81.

The protein resides in the cytoplasm. It is found in the nucleus. Cyclin partner of the cyclin-dependent kinase (CDK) PHO85. Together with cyclin PCL7, controls glycogen phosphorylase and glycogen synthase activities in response to nutrient availablility. The PCL6-PHO85 cyclin-CDK holoenzyme has GLC8 kinase activity and phosphorylates and inactivates the phosphatase PP1-2 inhibitor GLC8, causing activation of PP1-2, which then dephosphorylates and activates glycogen phosphorylase. PCL6-PHO85 also phosphorylates YJL084C. This chain is PHO85 cyclin-6 (PCL6), found in Saccharomyces cerevisiae (strain ATCC 204508 / S288c) (Baker's yeast).